We begin with the raw amino-acid sequence, 636 residues long: 1-deoxy-D-xylulose-5-phosphate synthase 2 (636 aa).

Residues H78 and 119 to 121 (AHS) each bind thiamine diphosphate. D150 serves as a coordination point for Mg(2+). Residues 151–152 (GS), N179, Y288, and E370 each bind thiamine diphosphate. Position 179 (N179) interacts with Mg(2+).

This sequence belongs to the transketolase family. DXPS subfamily. As to quaternary structure, homodimer. The cofactor is Mg(2+). Thiamine diphosphate serves as cofactor.

The enzyme catalyses D-glyceraldehyde 3-phosphate + pyruvate + H(+) = 1-deoxy-D-xylulose 5-phosphate + CO2. Its pathway is metabolic intermediate biosynthesis; 1-deoxy-D-xylulose 5-phosphate biosynthesis; 1-deoxy-D-xylulose 5-phosphate from D-glyceraldehyde 3-phosphate and pyruvate: step 1/1. Its function is as follows. Catalyzes the acyloin condensation reaction between C atoms 2 and 3 of pyruvate and glyceraldehyde 3-phosphate to yield 1-deoxy-D-xylulose-5-phosphate (DXP). This is 1-deoxy-D-xylulose-5-phosphate synthase 2 from Jannaschia sp. (strain CCS1).